The sequence spans 379 residues: Odorant receptor 33b (379 aa).

The Cytoplasmic segment spans residues 1–37 (MDLKPRVIRSEDIYRTYWLYWHLLGLESNFFLNRLLD). Residues 38-58 (LVITIFVTIWYPIHLILGLFM) form a helical membrane-spanning segment. Residues 59 to 64 (ERSLGD) lie on the Extracellular side of the membrane. A helical membrane pass occupies residues 65–85 (VCKGLPITAACFFASFKFICF). At 86 to 129 (RFKLSEIKEIEILFKELDQRALSREECEFFNQNTRREANFIWKS) the chain is on the cytoplasmic side. Residues 130–150 (FIVAYGLSNISAIASVLFGGG) form a helical membrane-spanning segment. Residues 151–165 (HKLLYPAWFPYDVQA) lie on the Extracellular side of the membrane. A helical transmembrane segment spans residues 166 to 186 (TELIFWLSVTYQIAGVSLAIL). Residues 187–256 (QNLANDSYPP…LLRSTMNISQ (70 aa)) lie on the Cytoplasmic side of the membrane. Residues 257 to 277 (LGQFISSGVNISITLVNILFF) form a helical membrane-spanning segment. The Extracellular portion of the chain corresponds to 278–281 (ADNN). Residues 282–302 (FAITYYGVYFLSMVLELFPCC) traverse the membrane as a helical segment. Residues 303-355 (YYGTLISVEMNQLTYAIYSSNWMSMNRSYSRILLIFMQLTLAEVQIKAGGMIG) are Cytoplasmic-facing. The chain crosses the membrane as a helical span at residues 356-376 (IGMNAFFATVRLAYSFFTLAM). Residues 377–379 (SLR) lie on the Extracellular side of the membrane.

It belongs to the insect chemoreceptor superfamily. Heteromeric odorant receptor channel (TC 1.A.69) family. Or2a subfamily. Interacts with Orco. Complexes exist early in the endomembrane system in olfactory sensory neurons (OSNs), coupling these complexes to the conserved ciliary trafficking pathway. Expressed in 15 cells in the antenna but not the maxillary palp.

The protein localises to the cell membrane. Odorant receptor which mediates acceptance or avoidance behavior, depending on its substrates. The odorant receptor repertoire encodes a large collection of odor stimuli that vary widely in identity, intensity, and duration. May form a complex with Orco to form odorant-sensing units, providing sensitive and prolonged odorant signaling and calcium permeability. Involved in the behavioral responses to pentyl acetate and pyrazines. The polypeptide is Odorant receptor 33b (Or33b) (Drosophila melanogaster (Fruit fly)).